The following is a 233-amino-acid chain: Large ribosomal subunit protein uL1 (233 aa).

It belongs to the universal ribosomal protein uL1 family. As to quaternary structure, part of the 50S ribosomal subunit.

Its function is as follows. Binds directly to 23S rRNA. The L1 stalk is quite mobile in the ribosome, and is involved in E site tRNA release. Protein L1 is also a translational repressor protein, it controls the translation of the L11 operon by binding to its mRNA. In Shewanella woodyi (strain ATCC 51908 / MS32), this protein is Large ribosomal subunit protein uL1.